A 189-amino-acid polypeptide reads, in one-letter code: Translation initiation factor IF-3 (189 aa).

The protein belongs to the IF-3 family. In terms of assembly, monomer.

The protein resides in the cytoplasm. Functionally, IF-3 binds to the 30S ribosomal subunit and shifts the equilibrium between 70S ribosomes and their 50S and 30S subunits in favor of the free subunits, thus enhancing the availability of 30S subunits on which protein synthesis initiation begins. The protein is Translation initiation factor IF-3 of Corynebacterium glutamicum (strain R).